We begin with the raw amino-acid sequence, 379 residues long: Cytochrome b (379 aa).

4 helical membrane passes run 33–53 (FGSL…FLAM), 77–98 (WLIR…YLHI), 113–133 (WNVG…GYVL), and 178–198 (FFAF…VHLI). Heme b contacts are provided by His83 and His97. Positions 182 and 196 each coordinate heme b. A ubiquinone is bound at residue His201. 4 helical membrane passes run 226-246 (YKDI…ALFS), 288-308 (LGGV…PLLH), 320-340 (FTQV…WIGG), and 347-367 (FIII…VLAP).

Belongs to the cytochrome b family. The cytochrome bc1 complex contains 3 respiratory subunits (MT-CYB, CYC1 and UQCRFS1), 2 core proteins (UQCRC1 and UQCRC2) and probably 6 low-molecular weight proteins. It depends on heme b as a cofactor.

Its subcellular location is the mitochondrion inner membrane. Functionally, component of the ubiquinol-cytochrome c reductase complex (complex III or cytochrome b-c1 complex) that is part of the mitochondrial respiratory chain. The b-c1 complex mediates electron transfer from ubiquinol to cytochrome c. Contributes to the generation of a proton gradient across the mitochondrial membrane that is then used for ATP synthesis. The polypeptide is Cytochrome b (mt-cyb) (Poeciliopsis occidentalis (Gila topminnow)).